We begin with the raw amino-acid sequence, 258 residues long: Synapse differentiation-inducing gene protein 1 (258 aa).

Residues 1-181 (MDGIIEQKSM…NFLMMPPRDH (181 aa)) are Cytoplasmic-facing. The residue at position 137 (S137) is a Phosphoserine. Residues 182-202 (LGLSVFSMLCCFWPLGIAAFY) traverse the membrane as a helical segment. Residues 203–228 (LSHETNKAVAKGDLHQASTSSRRALF) are Extracellular-facing. The helical intramembrane region spans 229-249 (LAVLSITIGTGVYVGVAVALI). The Extracellular portion of the chain corresponds to 250–258 (AYLSKNNHL).

Belongs to the CD225/Dispanin family. Homodimer. Interacts with GRIA1 and GRIA2.

Its subcellular location is the cell membrane. The protein resides in the early endosome membrane. The protein localises to the postsynaptic density membrane. It localises to the synapse. It is found in the cell projection. Its subcellular location is the dendrite. The protein resides in the dendritic spine. In terms of biological role, may regulate AMPA receptor content at nascent synapses, and have a role in postsynaptic development and maturation. This Macaca fascicularis (Crab-eating macaque) protein is Synapse differentiation-inducing gene protein 1 (SYNDIG1).